We begin with the raw amino-acid sequence, 389 residues long: Elongation factor Tu-3 (389 aa).

Residues 10–203 form the tr-type G domain; the sequence is KPHLNIGTMG…AVDTYVPMPE (194 aa). Positions 19–26 are G1; sequence GHVDHGKT. GTP is bound at residue 19–26; sequence GHVDHGKT. Residue Thr26 participates in Mg(2+) binding. Residues 60 to 64 form a G2 region; that stretch reads GITIN. Residues 81–84 form a G3 region; sequence DMPG. GTP-binding positions include 81-85 and 136-139; these read DMPGH and NKAD. The G4 stretch occupies residues 136–139; that stretch reads NKAD. The segment at 173 to 175 is G5; the sequence is SGL.

Belongs to the TRAFAC class translation factor GTPase superfamily. Classic translation factor GTPase family. EF-Tu/EF-1A subfamily. As to quaternary structure, monomer.

The protein resides in the cytoplasm. It catalyses the reaction GTP + H2O = GDP + phosphate + H(+). In terms of biological role, GTP hydrolase that promotes the GTP-dependent binding of aminoacyl-tRNA to the A-site of ribosomes during protein biosynthesis. The polypeptide is Elongation factor Tu-3 (Streptomyces ramocissimus).